Here is a 307-residue protein sequence, read N- to C-terminus: Small ribosomal subunit biogenesis GTPase RsgA (307 aa).

Positions 1–21 are disordered; that stretch reads MPSEHPFSDGIPTPNPKETMN. Residues 85-242 form the CP-type G domain; the sequence is RQDAWKTKLI…LIDSPGLQEF (158 aa). GTP is bound by residues 135–138 and 184–192; these read NKAD and GQSGMGKST. Zn(2+)-binding residues include Cys266, Cys271, His273, and Cys279.

Belongs to the TRAFAC class YlqF/YawG GTPase family. RsgA subfamily. Monomer. Associates with 30S ribosomal subunit, binds 16S rRNA. It depends on Zn(2+) as a cofactor.

The protein resides in the cytoplasm. One of several proteins that assist in the late maturation steps of the functional core of the 30S ribosomal subunit. Helps release RbfA from mature subunits. May play a role in the assembly of ribosomal proteins into the subunit. Circularly permuted GTPase that catalyzes slow GTP hydrolysis, GTPase activity is stimulated by the 30S ribosomal subunit. This chain is Small ribosomal subunit biogenesis GTPase RsgA, found in Neisseria meningitidis serogroup B (strain ATCC BAA-335 / MC58).